A 382-amino-acid chain; its full sequence is Lipid-A-disaccharide synthase (382 aa).

The protein belongs to the LpxB family.

It carries out the reaction 2-N,3-O-bis[(3R)-3-hydroxytetradecanoyl]-alpha-D-glucosaminyl 1-phosphate + UDP-2-N,3-O-bis[(3R)-3-hydroxytetradecanoyl]-alpha-D-glucosamine = lipid A disaccharide (E. coli) + UDP + H(+). It catalyses the reaction a lipid X + a UDP-2-N,3-O-bis[(3R)-3-hydroxyacyl]-alpha-D-glucosamine = a lipid A disaccharide + UDP + H(+). It functions in the pathway glycolipid biosynthesis; lipid IV(A) biosynthesis; lipid IV(A) from (3R)-3-hydroxytetradecanoyl-[acyl-carrier-protein] and UDP-N-acetyl-alpha-D-glucosamine: step 5/6. Condensation of UDP-2,3-diacylglucosamine and 2,3-diacylglucosamine-1-phosphate to form lipid A disaccharide, a precursor of lipid A, a phosphorylated glycolipid that anchors the lipopolysaccharide to the outer membrane of the cell. This chain is Lipid-A-disaccharide synthase, found in Salmonella typhimurium (strain LT2 / SGSC1412 / ATCC 700720).